Reading from the N-terminus, the 223-residue chain is Sigma non-opioid intracellular receptor 1 (223 aa).

Topologically, residues M1–W9 are lumenal. The targeting to endoplasmic reticulum-associated lipid droplets stretch occupies residues Q2 to R8. Residues L10 to L30 form a helical membrane-spanning segment. Over G31–P223 the chain is Cytoplasmic. Positions S99–L106 are important for ligand-binding. Residues V177–P223 are C-terminal hydrophobic region.

The protein belongs to the ERG2 family. As to quaternary structure, homotrimer. Forms a ternary complex with ANK2 and ITPR3. The complex is disrupted by agonists. Interacts with KCNA4. Interacts with KCNA2; cocaine consumption leads to increased interaction. Interacts with RNF112 in an oxidative stress-regulated manner. In terms of tissue distribution, ubiquitously expressed with higher expression in liver, kidney and steroid-producing tissues such as placenta, ovary and adrenal gland.

The protein resides in the nucleus inner membrane. It is found in the nucleus outer membrane. It localises to the nucleus envelope. The protein localises to the cytoplasmic vesicle. Its subcellular location is the endoplasmic reticulum membrane. The protein resides in the membrane. It is found in the lipid droplet. It localises to the cell junction. The protein localises to the cell membrane. Its subcellular location is the cell projection. The protein resides in the growth cone. It is found in the postsynaptic density membrane. In terms of biological role, functions in lipid transport from the endoplasmic reticulum and is involved in a wide array of cellular functions probably through regulation of the biogenesis of lipid microdomains at the plasma membrane. Involved in the regulation of different receptors it plays a role in BDNF signaling and EGF signaling. Also regulates ion channels like the potassium channel and could modulate neurotransmitter release. Plays a role in calcium signaling through modulation together with ANK2 of the ITP3R-dependent calcium efflux at the endoplasmic reticulum. Plays a role in several other cell functions including proliferation, survival and death. Originally identified for its ability to bind various psychoactive drugs it is involved in learning processes, memory and mood alteration. Necessary for proper mitochondrial axonal transport in motor neurons, in particular the retrograde movement of mitochondria. Plays a role in protecting cells against oxidative stress-induced cell death via its interaction with RNF112. The sequence is that of Sigma non-opioid intracellular receptor 1 (SIGMAR1) from Cavia porcellus (Guinea pig).